The chain runs to 405 residues: Obg-like ATPase homolog (405 aa).

The OBG-type G domain occupies 17–283 (PTSGIVGLAN…CKGIASEYFD (267 aa)). Residues 26–31 (NVGKST) and Val-231 each bind ATP. The TGS domain occupies 312 to 398 (NLISFFTCGP…QDNDIALFKA (87 aa)).

It belongs to the TRAFAC class OBG-HflX-like GTPase superfamily. OBG GTPase family.

The protein resides in the mitochondrion. Its function is as follows. Hydrolyzes ATP, and can also hydrolyze GTP with lower efficiency. Has lower affinity for GTP. The sequence is that of Obg-like ATPase homolog (YLF2) from Saccharomyces cerevisiae (strain ATCC 204508 / S288c) (Baker's yeast).